We begin with the raw amino-acid sequence, 187 residues long: Cytochrome b-245 chaperone 1 (187 aa).

The chain crosses the membrane as a helical span at residues 20–42 (GIRSWSLLVGILSTGLAAAYYSG). The tract at residues 167–187 (ESPSERSQSSDSEPDGPGGQS) is disordered. Phosphoserine is present on residues S168 and S170.

Belongs to the CYBC1 family. Interacts with CYBB; CYBC1 may act as a chaperone stabilizing Cytochrome b-245 heterodimer.

The protein resides in the endoplasmic reticulum membrane. In terms of biological role, functions as a chaperone necessary for a stable expression of the CYBA and CYBB subunits of the cytochrome b-245 heterodimer. Controls the phagocyte respiratory burst and is essential for innate immunity. This is Cytochrome b-245 chaperone 1 from Rattus norvegicus (Rat).